Reading from the N-terminus, the 265-residue chain is Endochitinase At2g43580 (265 aa).

Residues 1–24 form the signal peptide; it reads MALTKIFLILLLSLLGLYSETVKS. The Chitin-binding type-1 domain maps to 25–59; that stretch reads QNCDCAPNLCCSQFGYCGTTADYCGSTCQSGPCRV. 4 disulfides stabilise this stretch: cysteine 27–cysteine 35, cysteine 29–cysteine 41, cysteine 34–cysteine 48, and cysteine 52–cysteine 57. Residues 67 to 265 form a catalytic region; that stretch reads GLVGNIVTQI…GLDPGANITC (199 aa). Asparagine 102 carries N-linked (GlcNAc...) asparagine glycosylation. The Proton donor role is filled by glutamate 129. An N-linked (GlcNAc...) asparagine glycan is attached at asparagine 262.

Belongs to the glycosyl hydrolase 19 family. Chitinase class I subfamily.

The catalysed reaction is Random endo-hydrolysis of N-acetyl-beta-D-glucosaminide (1-&gt;4)-beta-linkages in chitin and chitodextrins.. This chain is Endochitinase At2g43580, found in Arabidopsis thaliana (Mouse-ear cress).